Reading from the N-terminus, the 321-residue chain is MHKYQTHWVEHSIVKILSSTGKKHIALMAGGMSAEREVSLVSSEGVSKALIELGYRVTFIDMGADIAVRLQEIKPDIVFNCLHGTYGEDGGLPGLLNIMRIPYTHSGVLSSALAFDKIHSRIWFLTNNINMAESIVVNKSDNIKNDPMKRPYVIKPLTQGSSIGVEVIFAEDDFNFADYDFPYGDQVIIEQYIKGRELQVAVLNGKALGALEIKLLKNRFYDYETKYTAGFADHLCPAPLPANLYEKLLIESEKIYKTMNCKGPARAEFILEEQTNKLYALEINTHPGMMSLSIVPEIAAYAGINFTNLIEEIIKTASFES.

The ATP-grasp domain maps to 121–315 (RIWFLTNNIN…FTNLIEEIIK (195 aa)). 147 to 199 (PMKRPYVIKPLTQGSSIGVEVIFAEDDFNFADYDFPYGDQVIIEQYIKGRELQ) contacts ATP. Residues Glu268, Glu282, and Asn284 each coordinate Mg(2+).

Belongs to the D-alanine--D-alanine ligase family. It depends on Mg(2+) as a cofactor. Requires Mn(2+) as cofactor.

The protein resides in the cytoplasm. The catalysed reaction is 2 D-alanine + ATP = D-alanyl-D-alanine + ADP + phosphate + H(+). The protein operates within cell wall biogenesis; peptidoglycan biosynthesis. In terms of biological role, cell wall formation. The polypeptide is D-alanine--D-alanine ligase (Rickettsia rickettsii (strain Iowa)).